A 508-amino-acid polypeptide reads, in one-letter code: Histidine ammonia-lyase (508 aa).

Residues 143 to 145 constitute a cross-link (5-imidazolinone (Ala-Gly)); sequence ASG. The residue at position 144 (Ser-144) is a 2,3-didehydroalanine (Ser).

It belongs to the PAL/histidase family. In terms of processing, contains an active site 4-methylidene-imidazol-5-one (MIO), which is formed autocatalytically by cyclization and dehydration of residues Ala-Ser-Gly.

The protein localises to the cytoplasm. It catalyses the reaction L-histidine = trans-urocanate + NH4(+). Its pathway is amino-acid degradation; L-histidine degradation into L-glutamate; N-formimidoyl-L-glutamate from L-histidine: step 1/3. The sequence is that of Histidine ammonia-lyase from Klebsiella pneumoniae subsp. pneumoniae (strain ATCC 700721 / MGH 78578).